The primary structure comprises 259 residues: Protein unc-50 homolog (259 aa).

Position 1 is an N-acetylmethionine (methionine 1). The Cytoplasmic segment spans residues 1–82 (MLPSTSLSSS…TKDQWARDDP (82 aa)). Serine 6 is subject to Phosphoserine. The chain crosses the membrane as a helical span at residues 83 to 103 (AFLVLLSIWLCVSTIGFGFVL). Residues 104 to 112 (DMGFFETIK) are Lumenal-facing. The helical transmembrane segment at 113-133 (LLLWVVFIDCVGVGLLISTLM) threads the bilayer. Residues 134 to 163 (WFVSNKYLVKRQSRDYDVEWGYAFDVHLNA) are Cytoplasmic-facing. Residues 164–184 (FYPLLVILHFIQLFFINHVIL) traverse the membrane as a helical segment. At 185–187 (TDT) the chain is on the lumenal side. A helical membrane pass occupies residues 188-208 (FIGYLVGNTLWLIAVGYYIYV). Residues 209–222 (TFLGYSALPFLKNT) are Cytoplasmic-facing. Residues 223 to 243 (VILLYPFAPLMVLYGLSLALG) form a helical membrane-spanning segment. The Lumenal segment spans residues 244–259 (WNFTHTLCSFYKYRVK).

It belongs to the unc-50 family. As to expression, highly expressed in periodontal ligament and bone marrow, but not in gingival fibroblasts.

The protein localises to the nucleus inner membrane. It is found in the golgi apparatus membrane. Functionally, involved in the cell surface expression of neuronal nicotinic receptors. Binds RNA. In Mus musculus (Mouse), this protein is Protein unc-50 homolog (Unc50).